A 105-amino-acid polypeptide reads, in one-letter code: uncharacterized protein (105 aa).

This is an uncharacterized protein from Homo sapiens (Human).